We begin with the raw amino-acid sequence, 241 residues long: Ribosome assembly factor mrt4 (241 aa).

Belongs to the universal ribosomal protein uL10 family. As to quaternary structure, associates with the pre-60S ribosomal particle.

It localises to the nucleus. The protein resides in the nucleolus. Its subcellular location is the cytoplasm. In terms of biological role, component of the ribosome assembly machinery. Nuclear paralog of the ribosomal protein P0, it binds pre-60S subunits at an early stage of assembly in the nucleolus, and is replaced by P0 in cytoplasmic pre-60S subunits and mature 80S ribosomes. This Schizosaccharomyces pombe (strain 972 / ATCC 24843) (Fission yeast) protein is Ribosome assembly factor mrt4.